Consider the following 133-residue polypeptide: Nickel-responsive regulator (133 aa).

The Ni(2+) site is built by H76, H87, H89, and C95.

It belongs to the transcriptional regulatory CopG/NikR family. In terms of assembly, homotetramer. Ni(2+) serves as cofactor.

Its function is as follows. Transcriptional repressor of the nikABCDE operon. Is active in the presence of excessive concentrations of intracellular nickel. The polypeptide is Nickel-responsive regulator (Salmonella paratyphi A (strain ATCC 9150 / SARB42)).